A 425-amino-acid polypeptide reads, in one-letter code: Pre-mRNA-splicing factor RBM22 (425 aa).

The segment at 159–186 (RNRPHICSFWVKGECKRGEECPYRHEKP) adopts a C3H1-type zinc-finger fold. The RRM domain occupies 232–305 (TTLYIGGLGE…RRLNVKWGRS (74 aa)). Disordered stretches follow at residues 304 to 331 (RSQA…PGLP) and 384 to 425 (HTMD…HGGP). Positions 389 to 399 (MAPPVPPPMAL) are enriched in pro residues.

Belongs to the SLT11 family. Component of the pre-catalytic and catalytic spliceosome complexes. Component of the postcatalytic spliceosome P complex.

The protein resides in the nucleus. It is found in the cytoplasm. Functionally, required for pre-mRNA splicing as component of the activated spliceosome. Involved in the first step of pre-mRNA splicing. Binds directly to the internal stem-loop (ISL) domain of the U6 snRNA and to the pre-mRNA intron near the 5' splice site during the activation and catalytic phases of the spliceosome cycle. Required for normal early embryogenesis. The sequence is that of Pre-mRNA-splicing factor RBM22 (rbm22) from Danio rerio (Zebrafish).